Here is a 338-residue protein sequence, read N- to C-terminus: Taste receptor type 2 member 39 (338 aa).

The Extracellular segment spans residues 1–30; that stretch reads MLGRCFPPDTKEKQQLRMTKLCDPAESELS. A helical transmembrane segment spans residues 31-51; it reads PFLITLILAVLLAEYLIGIIA. Topologically, residues 52–74 are cytoplasmic; it reads NGFIMAIHAAEWVQNKAVSTSGR. The chain crosses the membrane as a helical span at residues 75–95; sequence ILVFLSVSRIALQSLMMLEIT. Topologically, residues 96–116 are extracellular; that stretch reads ISSTSLSFYSEDAVYYAFKIS. The helical transmembrane segment at 117–137 threads the bilayer; it reads FIFLNFCSLWFAAWLSFFYFV. At 138–156 the chain is on the cytoplasmic side; it reads KIANFSYPLFLKLRWRITG. A helical transmembrane segment spans residues 157–177; that stretch reads LIPWLLWLSVFISFSHSMFCI. The Extracellular portion of the chain corresponds to 178–205; sequence NIXTVYCNNSFPIHSSNSTKKTYLSEIN. Asn185 and Asn194 each carry an N-linked (GlcNAc...) asparagine glycan. A helical membrane pass occupies residues 206–226; that stretch reads VVGLAFFFNLGIVTPLIMFIL. The Cytoplasmic portion of the chain corresponds to 227 to 262; the sequence is TATLLILSLKRHTLHMGSNATGSNDPSMEAHMGAIK. The helical transmembrane segment at 263–283 threads the bilayer; the sequence is ATSYFLILYIFNAVALFIYLS. Residues 284–291 lie on the Extracellular side of the membrane; that stretch reads NMFDINSL. Residues 292 to 312 form a helical membrane-spanning segment; it reads WNNLCQIIMAAYPASHSILLI. The Cytoplasmic segment spans residues 313–338; the sequence is QDNPGLRRAWKRLQLRLHLYPKEWTL.

This sequence belongs to the G-protein coupled receptor T2R family.

It localises to the membrane. Functionally, receptor that may play a role in the perception of bitterness and is gustducin-linked. May play a role in sensing the chemical composition of the gastrointestinal content. The activity of this receptor may stimulate alpha gustducin, mediate PLC-beta-2 activation and lead to the gating of TRPM5. The chain is Taste receptor type 2 member 39 (TAS2R39) from Gorilla gorilla gorilla (Western lowland gorilla).